We begin with the raw amino-acid sequence, 62 residues long: Light-harvesting protein B-870 alpha chain (62 aa).

The residue at position 1 (methionine 1) is an N-formylmethionine. Residues 1–12 (MWRIWQLFDPRQ) are Cytoplasmic-facing. A helical membrane pass occupies residues 13–33 (ALVGLATFLFVLALLIHFILL). Residue histidine 29 participates in a bacteriochlorophyll binding. At 34-52 (STERFNWLEGASTKPVQTS) the chain is on the periplasmic side. Positions 53–62 (MVMPSSDLAV) are excised as a propeptide.

It belongs to the antenna complex alpha subunit family. In terms of assembly, the core complex is formed by different alpha and beta chains, binding bacteriochlorophyll molecules, and arranged most probably in tetrameric structures disposed around the reaction center. The non-pigmented gamma chains may constitute additional components.

The protein localises to the cell inner membrane. Antenna complexes are light-harvesting systems, which transfer the excitation energy to the reaction centers. In Rhodospirillum rubrum, this protein is Light-harvesting protein B-870 alpha chain.